Consider the following 320-residue polypeptide: o-succinylbenzoate synthase (320 aa).

K133 serves as the catalytic Proton donor. Residues D161, E190, and D213 each coordinate Mg(2+). K235 acts as the Proton acceptor in catalysis.

This sequence belongs to the mandelate racemase/muconate lactonizing enzyme family. MenC type 1 subfamily. A divalent metal cation serves as cofactor.

It carries out the reaction (1R,6R)-6-hydroxy-2-succinyl-cyclohexa-2,4-diene-1-carboxylate = 2-succinylbenzoate + H2O. It participates in quinol/quinone metabolism; 1,4-dihydroxy-2-naphthoate biosynthesis; 1,4-dihydroxy-2-naphthoate from chorismate: step 4/7. The protein operates within quinol/quinone metabolism; menaquinone biosynthesis. In terms of biological role, converts 2-succinyl-6-hydroxy-2,4-cyclohexadiene-1-carboxylate (SHCHC) to 2-succinylbenzoate (OSB). The chain is o-succinylbenzoate synthase from Salmonella newport (strain SL254).